Consider the following 446-residue polypeptide: tRNA-2-methylthio-N(6)-dimethylallyladenosine synthase (446 aa).

The MTTase N-terminal domain occupies 6-122 (RRYHITTFGC…LGDLLQQVFD (117 aa)). [4Fe-4S] cluster is bound by residues Cys-15, Cys-51, Cys-85, Cys-157, Cys-161, and Cys-164. One can recognise a Radical SAM core domain in the interval 143–380 (RDSNITAWVN…NHLVATKAAE (238 aa)). A TRAM domain is found at 383–446 (QRYLGRIEEI…RPFSLTGVIF (64 aa)).

Belongs to the methylthiotransferase family. MiaB subfamily. Monomer. [4Fe-4S] cluster is required as a cofactor.

It is found in the cytoplasm. It catalyses the reaction N(6)-dimethylallyladenosine(37) in tRNA + (sulfur carrier)-SH + AH2 + 2 S-adenosyl-L-methionine = 2-methylsulfanyl-N(6)-dimethylallyladenosine(37) in tRNA + (sulfur carrier)-H + 5'-deoxyadenosine + L-methionine + A + S-adenosyl-L-homocysteine + 2 H(+). Functionally, catalyzes the methylthiolation of N6-(dimethylallyl)adenosine (i(6)A), leading to the formation of 2-methylthio-N6-(dimethylallyl)adenosine (ms(2)i(6)A) at position 37 in tRNAs that read codons beginning with uridine. The chain is tRNA-2-methylthio-N(6)-dimethylallyladenosine synthase from Microcystis aeruginosa (strain NIES-843 / IAM M-2473).